A 643-amino-acid polypeptide reads, in one-letter code: MMFIPATLGTFVLASLLPATVGAGIPNAAADVAVRALPNAPDGYAPAEVDCPSTKPAVRSAAKLSQQEQDWLKKRRMKTTGAMADFFSRVKIEGFDAVAYLVGNADNVAKLPNVAIAVSGGGYRALMNGAGALKAFDSRTDNSTEPGQLGGLLQSATYLSGLSGGGWLLGSMYVNNDSTITELQKGGSNSLWKFNRSILEGPDDGSSGVVDTAEYYKEMIKEISRKKAAGFETSITDIWGRALSYQLINAPKGGPAYTWSSISQNSKFQSGDVPFPLLVADGRNPGEKLIGGNATIFEFNPYEFGTWDPTIFGFVPTQYIGSKFEAGTLPSDEKCVRGMDNAGFIMGTSSSLFNQFALHLDSQDLPKVVKDSLRDFLSSLDEANNDIAEYKPNPFFGYAKSTSPFAGVKSLPVVDGGEDKQNIPFHPLIQPARHVDVIFAIDSSADTELAWPNGDSIIATYQRSLNSTGIANGTSFPAIPDNNTFINLGLNHNPTFFGCDSSNTTNPTPLIVYIPNSPYVTHSNVSTFNLKYNTTQRDAIILNGYNVATMANATRDGNWPTCVGCAMLSRSLERTKTAVPDACKQCFKMYCWDGTLNSTKPDVYDPKLFLTEVDLQSAAKGLHASGKLSLVAAVVTLLSILLV.

Residues 1-22 (MMFIPATLGTFVLASLLPATVG) form the signal peptide. One can recognise a PLA2c domain in the interval 50–597 (DCPSTKPAVR…KMYCWDGTLN (548 aa)). Asn-142, Asn-176, Asn-195, Asn-293, Asn-466, Asn-472, Asn-482, Asn-503, Asn-524, Asn-533, Asn-552, and Asn-597 each carry an N-linked (GlcNAc...) asparagine glycan.

This sequence belongs to the lysophospholipase family.

It is found in the secreted. It carries out the reaction a 1-acyl-sn-glycero-3-phosphocholine + H2O = sn-glycerol 3-phosphocholine + a fatty acid + H(+). Catalyzes the release of fatty acids from lysophospholipids. Phospholipase B may well contribute to pathogenicity by abetting the fungus in damaging host cell membranes. This chain is Lysophospholipase ARB_05919, found in Arthroderma benhamiae (strain ATCC MYA-4681 / CBS 112371) (Trichophyton mentagrophytes).